A 76-amino-acid polypeptide reads, in one-letter code: Bacteriocin uberolysin (76 aa).

Residues 1 to 6 (MDILLE) constitute a propeptide that is removed on maturation. Positions 7–76 (LAGYTGIASG…RNLKAQAVIW (70 aa)) form a cross-link, cyclopeptide (Leu-Trp).

It belongs to the bacteriocin class V family.

The protein localises to the secreted. Functionally, cyclopeptide antibiotic with bacteriolytic activity against most streptococci (except S.rattus and S.mutans), Listeria spp., enterococci and staphylococci. The protein is Bacteriocin uberolysin (ublA) of Streptococcus uberis.